We begin with the raw amino-acid sequence, 259 residues long: Hydroxyethylthiazole kinase (259 aa).

M37 provides a ligand contact to substrate. ATP-binding residues include R113 and T158. G185 contributes to the substrate binding site.

The protein belongs to the Thz kinase family. The cofactor is Mg(2+).

It carries out the reaction 5-(2-hydroxyethyl)-4-methylthiazole + ATP = 4-methyl-5-(2-phosphooxyethyl)-thiazole + ADP + H(+). It participates in cofactor biosynthesis; thiamine diphosphate biosynthesis; 4-methyl-5-(2-phosphoethyl)-thiazole from 5-(2-hydroxyethyl)-4-methylthiazole: step 1/1. In terms of biological role, catalyzes the phosphorylation of the hydroxyl group of 4-methyl-5-beta-hydroxyethylthiazole (THZ). This Helicobacter pylori (strain ATCC 700392 / 26695) (Campylobacter pylori) protein is Hydroxyethylthiazole kinase.